The chain runs to 341 residues: MGELMAFLLPLIIVLMVKHSDSRTHSLRYFRLGVSDPIHGVPEFISVGYVDSHPITTYDSVTRQKEPRAPWMAENLAPDHWERYTQLLRGWQQMFKVELKRLQRHYNHSGSHTYQRMIGCELLEDGSTTGFLQYAYDGQDFLIFNKDTLSWLAVDNVAHTIKQAWEANQHELLYQKNWLEEECIAWLKRFLEYGKDILQRTEPPLVRVNRKETFPGVTALFCKAHGFYPPEIYMTWMKNGEEIVQEIDYGDILPSGDGTYQTWASVELDPQSSNLYSCHVEHCGVHMVLQVPQESETIPLVMKAVSGSIVLVIVLAGVGVLVWRRRPREQNGAIYLPTPDR.

The N-terminal stretch at 1 to 22 (MGELMAFLLPLIIVLMVKHSDS) is a signal peptide. The interval 23–109 (RTHSLRYFRL…KRLQRHYNHS (87 aa)) is alpha-1. Residues 23-201 (RTHSLRYFRL…EYGKDILQRT (179 aa)) form an antigen-binding cleft region. Over 23–302 (RTHSLRYFRL…QESETIPLVM (280 aa)) the chain is Extracellular. 8-(9H-purin-6-yl)-2-oxa-8-azabicyclo[3.3.1]nona-3,6-diene-4,6-dicarbaldehyde contacts are provided by Tyr-29 and Arg-31. Residues Arg-31, Ser-46, and Lys-65 each coordinate 5-(2-oxoethylideneamino)-6-(D-ribitylamino)uracil. Residues Arg-31, Ser-46, and Lys-65 each coordinate 5-(2-oxopropylideneamino)-6-(D-ribitylamino)uracil. 7-hydroxy-6-methyl-8-(1-D-ribityl)lumazine contacts are provided by Arg-31, Ser-46, and Lys-65. Positions 65 and 80 each coordinate 8-(9H-purin-6-yl)-2-oxa-8-azabicyclo[3.3.1]nona-3,6-diene-4,6-dicarbaldehyde. A 2-amino-4-oxopteridine-6-carbaldehyde-binding site is contributed by Lys-65. Residue Lys-65 coordinates pyridoxal. Asn-107 carries N-linked (GlcNAc...) asparagine glycosylation. Positions 110-201 (GSHTYQRMIG…EYGKDILQRT (92 aa)) are alpha-2. Residue Arg-116 coordinates 8-(9H-purin-6-yl)-2-oxa-8-azabicyclo[3.3.1]nona-3,6-diene-4,6-dicarbaldehyde. 5-(2-oxoethylideneamino)-6-(D-ribitylamino)uracil-binding residues include Arg-116, Tyr-174, and Gln-175. Residues Arg-116, Tyr-174, and Gln-175 each coordinate 5-(2-oxopropylideneamino)-6-(D-ribitylamino)uracil. 7-hydroxy-6-methyl-8-(1-D-ribityl)lumazine-binding residues include Arg-116, Tyr-174, and Gln-175. Cystine bridges form between Cys-120/Cys-183 and Cys-222/Cys-278. Residues 202–293 (EPPLVRVNRK…GVHMVLQVPQ (92 aa)) form an alpha-3 region. Residues 203–299 (PPLVRVNRKE…QVPQESETIP (97 aa)) enclose the Ig-like C1-type domain. Residues 294–302 (ESETIPLVM) form a connecting peptide region. Residues 303 to 323 (KAVSGSIVLVIVLAGVGVLVW) form a helical membrane-spanning segment. The Cytoplasmic segment spans residues 324–341 (RRRPREQNGAIYLPTPDR).

It belongs to the MHC class I family. Heterotrimer that consists of MR1, B2M and metabolite antigen. Major classes of metabolite ligands presented by MR1 include riboflavin-related antigens, pyrimidines and ribityl lumazines, nucleobase adducts and folate derivatives. Forms reversible covalent Schiff base complexes with microbial pyrimidine-based metabolite, which serves as a molecular switch triggering complete folding, stable association with B2M and translocation of the ternary complex from endoplasmic reticulum to the plasma membrane. Alternatively, forms non-Schiff base complexes with ribityl lumazines. On antigen-presenting cells, the ternary complex interacts with TCR on MR1-restricted T cells. Interacts with TAPBP and TAPBPL chaperones in the endoplasmic reticulum. TAPBP associated or not with MHC class I peptide loading complex binds ligand-free MR1 or MR1-B2M complex, providing for stable MR1 pools ready for metabolite antigen processing. TAPBPL interacts with MR1 in a ligand-independent way; this interaction may stabilize MR1 pool and facilitate ligand loading and dissociation. Structurally, MR1-B2M heterodimer adopts a topology similar to classical MHC class I molecules, with alpha-1 and alpha-2 domains of MR1 forming the antigen-binding cleft composed of two alpha-helices resting on a floor of 7-stranded anti-parallel beta-pleated sheet. MR1-B2M heterodimer (via alpha-helices) interacts with TCR (via CDR domains). N-glycosylated.

Its subcellular location is the cell membrane. The protein localises to the endoplasmic reticulum membrane. The protein resides in the golgi apparatus membrane. It is found in the early endosome membrane. It localises to the late endosome membrane. Its function is as follows. Antigen-presenting molecule specialized in displaying microbial pyrimidine-based metabolites to alpha-beta T cell receptors (TCR) on innate-type mucosal-associated invariant T (MAIT) cells. In complex with B2M preferentially presents riboflavin-derived metabolites to semi-invariant TCRs on MAIT cells, guiding immune surveillance of the microbial metabolome at mucosal epithelial barriers. Signature pyrimidine-based microbial antigens are generated via non-enzymatic condensation of metabolite intermediates of the riboflavin pathway with by-products arising from other metabolic pathways such as glycolysis. Typical potent antigenic metabolites are 5-(2-oxoethylideneamino)-6-D-ribitylaminouracil (5-OE-RU) and 5-(2-oxopropylideneamino)-6-D-ribitylaminouracil (5-OP-RU), products of condensation of 5-amino-6-D-ribityaminouracil (5-A-RU) with glyoxal or methylglyoxal by-products, respectively. May present microbial antigens to various MAIT cell subsets, providing for unique recognition of diverse microbes, including pathogens that do not synthesize riboflavin. Upon antigen recognition, elicits rapid innate-type MAIT cell activation to eliminate pathogenic microbes by directly killing infected cells. During T cell development, drives thymic selection and post-thymic terminal differentiation of MAIT cells in a process dependent on commensal microflora. Acts as an immune sensor of cancer cell metabolome. May present a tumor-specific or -associated metabolite essential for cancer cell survival to a pan-cancer TCR on a non-MAIT CD8-positive T cell clone, triggering T cell-mediated killing of a wide range of cancer cell types. May present tumor-enriched pyridoxal and pyridoxal 5'-phosphate antigens, enabling preferential recognition of cancer cells. Presents nucleobase carbonyl adducts generated during oxidative stress. Captures M3Ade, a nucleobase adduct composed of one adenine modified by a malondialdehyde trimer, for recognition by MR1-restricted T cell clones expressing a polyclonal TCR repertoire. This is Major histocompatibility complex class I-related protein 1 from Pan troglodytes (Chimpanzee).